The chain runs to 173 residues: MHHWQFFLAKYTRATLVSSSRLLHCNFKELSASISSFSILEYSIKEMASLLMLISSSLAFSKEDVVYLPIKTLCRCCPGCCNMDVKNLDTVSLPFVPAICRIDKLSWGFPTCSNKRFIRGKVCLPLISSICFLCNLLPAKRAILFYIKIVRKLVDLTQVSLRQEYKFKKSLLT.

This is an uncharacterized protein from Saccharomyces cerevisiae (strain ATCC 204508 / S288c) (Baker's yeast).